A 352-amino-acid chain; its full sequence is N-acetyl-gamma-glutamyl-phosphate reductase (352 aa).

Cysteine 155 is a catalytic residue.

This sequence belongs to the NAGSA dehydrogenase family. Type 1 subfamily.

Its subcellular location is the cytoplasm. It carries out the reaction N-acetyl-L-glutamate 5-semialdehyde + phosphate + NADP(+) = N-acetyl-L-glutamyl 5-phosphate + NADPH + H(+). The protein operates within amino-acid biosynthesis; L-arginine biosynthesis; N(2)-acetyl-L-ornithine from L-glutamate: step 3/4. Its function is as follows. Catalyzes the NADPH-dependent reduction of N-acetyl-5-glutamyl phosphate to yield N-acetyl-L-glutamate 5-semialdehyde. The polypeptide is N-acetyl-gamma-glutamyl-phosphate reductase (Cyanothece sp. (strain PCC 7425 / ATCC 29141)).